The primary structure comprises 454 residues: Tubulin alpha-A chain (454 aa).

GTP-binding residues include Q12, D72, S141, G145, T146, T180, N207, and N229. Residue D72 coordinates Mg(2+). E255 is an active-site residue.

Belongs to the tubulin family. Dimer of alpha and beta chains. A typical microtubule is a hollow water-filled tube with an outer diameter of 25 nm and an inner diameter of 15 nM. Alpha-beta heterodimers associate head-to-tail to form protofilaments running lengthwise along the microtubule wall with the beta-tubulin subunit facing the microtubule plus end conferring a structural polarity. Microtubules usually have 13 protofilaments but different protofilament numbers can be found in some organisms and specialized cells. It depends on Mg(2+) as a cofactor.

The protein localises to the cytoplasm. It localises to the cytoskeleton. It carries out the reaction GTP + H2O = GDP + phosphate + H(+). Tubulin is the major constituent of microtubules, a cylinder consisting of laterally associated linear protofilaments composed of alpha- and beta-tubulin heterodimers. Microtubules grow by the addition of GTP-tubulin dimers to the microtubule end, where a stabilizing cap forms. Below the cap, tubulin dimers are in GDP-bound state, owing to GTPase activity of alpha-tubulin. This Neurospora crassa (strain ATCC 24698 / 74-OR23-1A / CBS 708.71 / DSM 1257 / FGSC 987) protein is Tubulin alpha-A chain (tba-1).